The chain runs to 199 residues: Recombination protein RecR (199 aa).

The segment at 58–73 adopts a C4-type zinc-finger fold; it reads CSVCTNLTDRDPCRIC. The Toprim domain maps to 81–176; that stretch reads AVICVVEEPR…KVTRIAHGLP (96 aa).

It belongs to the RecR family.

In terms of biological role, may play a role in DNA repair. It seems to be involved in an RecBC-independent recombinational process of DNA repair. It may act with RecF and RecO. This Heliobacterium modesticaldum (strain ATCC 51547 / Ice1) protein is Recombination protein RecR.